Here is a 378-residue protein sequence, read N- to C-terminus: Erythronate-4-phosphate dehydrogenase (378 aa).

Residues Ser-45 and Thr-66 each coordinate substrate. Asp-146 and Thr-175 together coordinate NAD(+). The active site involves Arg-208. Position 232 (Asp-232) interacts with NAD(+). The active site involves Glu-237. The active-site Proton donor is His-254. Residue Gly-257 participates in NAD(+) binding. Tyr-258 provides a ligand contact to substrate.

The protein belongs to the D-isomer specific 2-hydroxyacid dehydrogenase family. PdxB subfamily. As to quaternary structure, homodimer.

Its subcellular location is the cytoplasm. The enzyme catalyses 4-phospho-D-erythronate + NAD(+) = (R)-3-hydroxy-2-oxo-4-phosphooxybutanoate + NADH + H(+). Its pathway is cofactor biosynthesis; pyridoxine 5'-phosphate biosynthesis; pyridoxine 5'-phosphate from D-erythrose 4-phosphate: step 2/5. Its function is as follows. Catalyzes the oxidation of erythronate-4-phosphate to 3-hydroxy-2-oxo-4-phosphonooxybutanoate. The protein is Erythronate-4-phosphate dehydrogenase of Salmonella dublin (strain CT_02021853).